Consider the following 492-residue polypeptide: Probable beta-1,4-xylosyltransferase IRX14H (492 aa).

Residues M1–P33 are Cytoplasmic-facing. The helical; Signal-anchor for type II membrane protein transmembrane segment at S34–F54 threads the bilayer. Topologically, residues R55 to S492 are lumenal. N-linked (GlcNAc...) asparagine glycosylation is found at N99, N196, and N314. The interval I457–S492 is disordered. Residues S473 to D484 show a composition bias toward basic and acidic residues.

This sequence belongs to the glycosyltransferase 43 family. As to expression, expressed in developing interfascicular fibers and xylem cells in stems and developing secondary xylem in roots.

The protein localises to the golgi apparatus membrane. Its function is as follows. Involved in the synthesis of the hemicellulose glucuronoxylan, a major component of secondary cell walls. Probably involved in the elongation of glucuronoxylan xylosyl backbone. The chain is Probable beta-1,4-xylosyltransferase IRX14H (IRX14H) from Arabidopsis thaliana (Mouse-ear cress).